Reading from the N-terminus, the 1968-residue chain is RNA replication polyprotein (1968 aa).

The Alphavirus-like MT domain occupies 63–254 (SPYSAVVHSH…YQQPLKGGYL (192 aa)). In terms of domain architecture, OTU spans 883-991 (YKRVSGPGDG…SEHYEPQVLR (109 aa)). The Peptidase C23 domain occupies 990 to 1080 (LRNGCVIESV…ISDEHMSFCG (91 aa)). Catalysis depends on residues C994 and H1075. The region spanning 1134-1316 (ATGVLGSALF…KVRSHRFLNC (183 aa)) is the (+)RNA virus helicase ATP-binding domain. Residue 1166-1173 (GTFGSGKS) coordinates ATP. The 138-residue stretch at 1317 to 1454 (NFIGRLPCEI…CKTAIPDDLN (138 aa)) folds into the (+)RNA virus helicase C-terminal domain. The 108-residue stretch at 1749-1856 (RICTESDYEA…SRRLQPTKKF (108 aa)) folds into the RdRp catalytic domain.

Belongs to the potexviruses/carlaviruses RNA replication protein family. Post-translationally, specific enzymatic cleavages by the viral protease yield mature proteins.

The enzyme catalyses RNA(n) + a ribonucleoside 5'-triphosphate = RNA(n+1) + diphosphate. It carries out the reaction ATP + H2O = ADP + phosphate + H(+). In terms of biological role, RNA-directed RNA polymerase involved in viral RNA replication. Its function is as follows. Protease: Thiol protease that cleaves the polyprotein. The polypeptide is RNA replication polyprotein (Solanum tuberosum (Potato)).